Consider the following 352-residue polypeptide: Outer membrane protein assembly factor BamC (352 aa).

The signal sequence occupies residues 1 to 24 (MAISLQKSTVVKVVGVSLVMLLAA). Cysteine 25 carries N-palmitoyl cysteine lipidation. The S-diacylglycerol cysteine moiety is linked to residue cysteine 25.

It belongs to the BamC family. Part of the Bam complex, which is composed of the outer membrane protein BamA, and four lipoproteins BamB, BamC, BamD and BamE.

The protein resides in the cell outer membrane. Its function is as follows. Part of the outer membrane protein assembly complex, which is involved in assembly and insertion of beta-barrel proteins into the outer membrane. This Yersinia pestis protein is Outer membrane protein assembly factor BamC.